Here is a 92-residue protein sequence, read N- to C-terminus: Acyl carrier protein AcpXL (92 aa).

A Carrier domain is found at 2 to 88 (TATFDKVADI…NLCAKIDELK (87 aa)). At S37 the chain carries O-(pantetheine 4'-phosphoryl)serine.

In terms of processing, 4'-phosphopantetheine is transferred from CoA to a specific serine of apo-ACP by AcpS. This modification is essential for activity because fatty acids are bound in thioester linkage to the sulfhydryl of the prosthetic group.

It localises to the cytoplasm. The protein operates within glycolipid biosynthesis; KDO(2)-lipid A biosynthesis. In terms of biological role, carrier of the growing fatty acid chain in fatty acid biosynthesis. Is involved in the transfer of long hydroxylated fatty acids to lipid A. Is acylated predominantly with 27-hydroxyoctacosanoic acid. The polypeptide is Acyl carrier protein AcpXL (acpXL) (Rhizobium etli (strain ATCC 51251 / DSM 11541 / JCM 21823 / NBRC 15573 / CFN 42)).